The sequence spans 317 residues: L-lactate dehydrogenase (317 aa).

NAD(+) contacts are provided by residues valine 17, aspartate 38, lysine 43, tyrosine 69, and 83–84 (GA). Residues glutamine 86 and arginine 92 each coordinate substrate. Residues serine 105, 122 to 124 (ATN), and serine 147 each bind NAD(+). Substrate is bound at residue 124-127 (NPVD). 152-155 (DTAR) serves as a coordination point for substrate. 2 residues coordinate beta-D-fructose 1,6-bisphosphate: arginine 157 and histidine 172. Histidine 179 functions as the Proton acceptor in the catalytic mechanism. Tyrosine 224 is modified (phosphotyrosine). Threonine 233 lines the substrate pocket.

It belongs to the LDH/MDH superfamily. LDH family. Homotetramer.

Its subcellular location is the cytoplasm. It catalyses the reaction (S)-lactate + NAD(+) = pyruvate + NADH + H(+). The protein operates within fermentation; pyruvate fermentation to lactate; (S)-lactate from pyruvate: step 1/1. Its activity is regulated as follows. Allosterically activated by fructose 1,6-bisphosphate (FBP). Its function is as follows. Catalyzes the conversion of lactate to pyruvate. In Geobacillus kaustophilus (strain HTA426), this protein is L-lactate dehydrogenase.